The following is a 233-amino-acid chain: Small ribosomal subunit protein uS3 (233 aa).

The KH type-2 domain maps to 39-107 (VRTFLTKELK…PAQINISEVR (69 aa)).

The protein belongs to the universal ribosomal protein uS3 family. Part of the 30S ribosomal subunit. Forms a tight complex with proteins S10 and S14.

Functionally, binds the lower part of the 30S subunit head. Binds mRNA in the 70S ribosome, positioning it for translation. This is Small ribosomal subunit protein uS3 from Pseudoalteromonas translucida (strain TAC 125).